The sequence spans 228 residues: Dolichyl-phosphate hexose transferase HVO_1613 (228 aa).

It belongs to the glycosyltransferase 2 family.

Its function is as follows. Glycosyltransferase that adds a monosaccharide to dolichol phosphate, thereby being responsible for generating one of the three monosaccharide-modified dolichol phosphates. The subunit onto which additional sugars are added is not known. The protein is Dolichyl-phosphate hexose transferase HVO_1613 of Haloferax volcanii (strain ATCC 29605 / DSM 3757 / JCM 8879 / NBRC 14742 / NCIMB 2012 / VKM B-1768 / DS2) (Halobacterium volcanii).